We begin with the raw amino-acid sequence, 339 residues long: Ketol-acid reductoisomerase (NADP(+)) (339 aa).

In terms of domain architecture, KARI N-terminal Rossmann spans 1-182 (MRVYYDRDAD…GGGRSGVIET (182 aa)). Residues 24–27 (YGSQ), R48, S51, T53, and 83–86 (DEHQ) each bind NADP(+). H108 is a catalytic residue. G134 is an NADP(+) binding site. The KARI C-terminal knotted domain occupies 183-328 (TFKEECETDL…AELRAMMPWI (146 aa)). D191, E195, E227, and E231 together coordinate Mg(2+). S252 lines the substrate pocket.

This sequence belongs to the ketol-acid reductoisomerase family. Mg(2+) is required as a cofactor.

It catalyses the reaction (2R)-2,3-dihydroxy-3-methylbutanoate + NADP(+) = (2S)-2-acetolactate + NADPH + H(+). The catalysed reaction is (2R,3R)-2,3-dihydroxy-3-methylpentanoate + NADP(+) = (S)-2-ethyl-2-hydroxy-3-oxobutanoate + NADPH + H(+). The protein operates within amino-acid biosynthesis; L-isoleucine biosynthesis; L-isoleucine from 2-oxobutanoate: step 2/4. It participates in amino-acid biosynthesis; L-valine biosynthesis; L-valine from pyruvate: step 2/4. In terms of biological role, involved in the biosynthesis of branched-chain amino acids (BCAA). Catalyzes an alkyl-migration followed by a ketol-acid reduction of (S)-2-acetolactate (S2AL) to yield (R)-2,3-dihydroxy-isovalerate. In the isomerase reaction, S2AL is rearranged via a Mg-dependent methyl migration to produce 3-hydroxy-3-methyl-2-ketobutyrate (HMKB). In the reductase reaction, this 2-ketoacid undergoes a metal-dependent reduction by NADPH to yield (R)-2,3-dihydroxy-isovalerate. The sequence is that of Ketol-acid reductoisomerase (NADP(+)) from Rhizorhabdus wittichii (strain DSM 6014 / CCUG 31198 / JCM 15750 / NBRC 105917 / EY 4224 / RW1) (Sphingomonas wittichii).